The chain runs to 347 residues: Protein N-terminal asparagine amidohydrolase (347 aa).

It carries out the reaction N-terminal L-asparaginyl-[protein] + H2O + H(+) = N-terminal L-aspartyl-[protein] + NH4(+). Functionally, N-terminal asparagine deamidase that mediates deamidation of N-terminal asparagine residues to aspartate. Required for the ubiquitin-dependent turnover of intracellular proteins that initiate with Met-Asn. These proteins are acetylated on the retained initiator methionine and can subsequently be modified by the removal of N-acetyl methionine by acylaminoacid hydrolase (AAH). Conversion of the resulting N-terminal asparagine to aspartate by NTAN1 renders the protein susceptible to arginylation, polyubiquitination and degradation as specified by the N-end rule. This enzyme does not act on substrates with internal or C-terminal asparagines and does not act on glutamine residues in any position. Does not seem to be involved in immune response, unlike the N-terminal glutamine amidohydrolase NTAQ1. This chain is Protein N-terminal asparagine amidohydrolase, found in Arabidopsis thaliana (Mouse-ear cress).